The sequence spans 331 residues: Cilia- and flagella-associated protein 119 (331 aa).

Residue Ser34 is modified to Phosphoserine. Disordered regions lie at residues 236-271 and 309-331; these read LWPESETEKEESKEMEEQAVTPQKEELETVAPPEPE and SSKLTALERPFQLPPGKGKSKTK. Residues 286 to 317 are a coiled coil; that stretch reads VNKELEQLQGLVEERLKASEERLSSKLTALER.

The protein resides in the cell projection. The protein localises to the cilium. It localises to the flagellum. Its subcellular location is the cytoplasmic vesicle. It is found in the secretory vesicle. The protein resides in the acrosome. The protein localises to the cytoplasm. This Homo sapiens (Human) protein is Cilia- and flagella-associated protein 119.